Here is a 376-residue protein sequence, read N- to C-terminus: MFKLPPISLYIHIPWCIKKCGYCDFYSYVNKSFIPEKEYIDHLLKDLEKDLSLIKEREINSIFIGGGTPSLLKSSSIKKMMREIKKRINISNTAEITIEANPTTLEYKRFFNYKKSGINRFSIGVQTFNSDLLKKIERTYNKREAILAVEEIKKINKNFNLDIMYGLPNQSLKDVLLDLQYAVKYNPTHISWYQLTLEPNTPFYVKKLNLPNENNIFKMLVEGEKFLKQSGYKKYEISSYAKLNYECQHNLNYWNFGDYIGIGCSAHGKITQINGDIIRTIKNKNINDFMNGKYLKHKNFVLKKDKPFEYFMNIFRLYKPVLKRQFEERTNINQNYIKEKIKKAIEKGYLKNKIDFWDTTKKGKMFLNSLLKIFLD.

A Radical SAM core domain is found at 1-236 (MFKLPPISLY…LKQSGYKKYE (236 aa)). Y10 provides a ligand contact to S-adenosyl-L-methionine. The [4Fe-4S] cluster site is built by C16, C20, and C23. Residues G66, 67–68 (GT), E99, Q126, R138, and D162 contribute to the S-adenosyl-L-methionine site.

Belongs to the anaerobic coproporphyrinogen-III oxidase family. HemW subfamily. It depends on [4Fe-4S] cluster as a cofactor.

It is found in the cytoplasm. Probably acts as a heme chaperone, transferring heme to an unknown acceptor. Binds one molecule of heme per monomer, possibly covalently. Binds 1 [4Fe-4S] cluster. The cluster is coordinated with 3 cysteines and an exchangeable S-adenosyl-L-methionine. The chain is Heme chaperone HemW from Buchnera aphidicola subsp. Schizaphis graminum (strain Sg).